The following is a 410-amino-acid chain: Elongation factor Tu, chloroplastic (410 aa).

A tr-type G domain is found at 10-214 (KPHVNIGTIG…QVDAYIPTPE (205 aa)). The G1 stretch occupies residues 19 to 26 (GHVDHGKT). A GTP-binding site is contributed by 19-26 (GHVDHGKT). Position 26 (Thr-26) interacts with Mg(2+). The tract at residues 60-64 (GITIN) is G2. The interval 81–84 (DCPG) is G3. Residues 81–85 (DCPGH) and 136–139 (NKED) contribute to the GTP site. The G4 stretch occupies residues 136–139 (NKED). Residues 174–176 (SAL) form a G5 region.

This sequence belongs to the TRAFAC class translation factor GTPase superfamily. Classic translation factor GTPase family. EF-Tu/EF-1A subfamily.

The protein localises to the plastid. It localises to the chloroplast. The catalysed reaction is GTP + H2O = GDP + phosphate + H(+). In terms of biological role, GTP hydrolase that promotes the GTP-dependent binding of aminoacyl-tRNA to the A-site of ribosomes during protein biosynthesis. This is Elongation factor Tu, chloroplastic (tufA) from Chlorokybus atmophyticus (Soil alga).